Here is a 441-residue protein sequence, read N- to C-terminus: tRNA modification GTPase MnmE (441 aa).

(6S)-5-formyl-5,6,7,8-tetrahydrofolate-binding residues include Arg23, Glu81, and Lys121. Positions 218-363 (GFRVAIVGPP…LESWIAAFVS (146 aa)) constitute a TrmE-type G domain. Residue Asn228 coordinates K(+). GTP contacts are provided by residues 228–233 (NAGKSS), 247–253 (TDIAGTT), 272–275 (DTAG), and 326–329 (NKAD). Mg(2+) is bound at residue Ser232. The K(+) site is built by Thr247, Ile249, and Thr252. Thr253 lines the Mg(2+) pocket. Lys441 is a (6S)-5-formyl-5,6,7,8-tetrahydrofolate binding site.

It belongs to the TRAFAC class TrmE-Era-EngA-EngB-Septin-like GTPase superfamily. TrmE GTPase family. As to quaternary structure, homodimer. Heterotetramer of two MnmE and two MnmG subunits. K(+) serves as cofactor.

The protein localises to the cytoplasm. Functionally, exhibits a very high intrinsic GTPase hydrolysis rate. Involved in the addition of a carboxymethylaminomethyl (cmnm) group at the wobble position (U34) of certain tRNAs, forming tRNA-cmnm(5)s(2)U34. The sequence is that of tRNA modification GTPase MnmE from Hyphomonas neptunium (strain ATCC 15444).